A 173-amino-acid polypeptide reads, in one-letter code: 16S rRNA aminocarboxypropyltransferase (173 aa).

4 residues coordinate S-adenosyl-L-methionine: Thr25, Leu72, Leu96, and Ser115.

Belongs to the TDD superfamily. TSR3 family.

The protein resides in the cytoplasm. It catalyses the reaction an N(1)-methylpseudouridine in rRNA + S-adenosyl-L-methionine = N(1)-methyl-N(3)-[(3S)-3-amino-3-carboxypropyl]pseudouridine in rRNA + S-methyl-5'-thioadenosine + H(+). Functionally, aminocarboxypropyltransferase that catalyzes the aminocarboxypropyl transfer on pseudouridine corresponding to position 914 in M.jannaschii 16S rRNA. It constitutes the last step in biosynthesis of the hypermodified N1-methyl-N3-(3-amino-3-carboxypropyl) pseudouridine (m1acp3-Psi). This Methanococcoides burtonii (strain DSM 6242 / NBRC 107633 / OCM 468 / ACE-M) protein is 16S rRNA aminocarboxypropyltransferase.